A 213-amino-acid polypeptide reads, in one-letter code: UPF0056 membrane protein AF_2111 (213 aa).

6 consecutive transmembrane segments (helical) span residues 1 to 21 (MDIA…FIII), 51 to 71 (IIAF…LDYF), 75 to 95 (ISSL…DILL), 118 to 138 (VFPL…GIVL), 142 to 162 (AGDV…YSIV), and 181 to 201 (ADIA…EFVF).

This sequence belongs to the UPF0056 (MarC) family.

The protein resides in the cell membrane. The protein is UPF0056 membrane protein AF_2111 of Archaeoglobus fulgidus (strain ATCC 49558 / DSM 4304 / JCM 9628 / NBRC 100126 / VC-16).